The primary structure comprises 501 residues: Cytochrome P450 81F4 (501 aa).

A Glycyl lysine isopeptide (Lys-Gly) (interchain with G-Cter in ubiquitin) cross-link involves residue lysine 245. A helical membrane pass occupies residues 285-305 (IIIKGLMLGIMVASSETSALT). Position 435 (cysteine 435) interacts with heme.

The protein belongs to the cytochrome P450 family. Heme is required as a cofactor.

The protein localises to the membrane. It participates in secondary metabolite biosynthesis. Functionally, involved in indole glucosinolate biosynthesis. Catalyzes hydroxylation reactions of the glucosinolate indole ring. Converts indol-3-yl-methylglucosinolate (I3M) to 1-hydroxy-indol-3-yl-methylglucosinolate (1OH-I3M) intermediate. This hydroxy intermediates is converted to 1-methoxy-indol-3-yl-methylglucosinolate (1MO-I3M) by indole glucosinolate methyltransferase 1 and 2 (IGMT1 and IGMT2). This Arabidopsis thaliana (Mouse-ear cress) protein is Cytochrome P450 81F4.